We begin with the raw amino-acid sequence, 172 residues long: uncharacterized protein (172 aa).

This is an uncharacterized protein from Orgyia pseudotsugata (Douglas-fir tussock moth).